A 124-amino-acid chain; its full sequence is uncharacterized protein (124 aa).

It localises to the cytoplasm. The protein localises to the nucleus. This is an uncharacterized protein from Schizosaccharomyces pombe (strain 972 / ATCC 24843) (Fission yeast).